A 126-amino-acid chain; its full sequence is MATSNQMGANTRSKKKKKNLKKALLGCPQKRGVCMRLLTRSPKKPNSAQRRVAKVRLSTKRVIFAHIPGEGHNLSPFSVVLVRGGNVRDLPGVRYKTIRGVKDLAPVLSRTNGRSKYGTKRPKVHT.

Over residues 1–11 (MATSNQMGANT) the composition is skewed to polar residues. Residues 1-21 (MATSNQMGANTRSKKKKKNLK) form a disordered region. The segment covering 12-21 (RSKKKKKNLK) has biased composition (basic residues).

It belongs to the universal ribosomal protein uS12 family.

The protein localises to the mitochondrion. In terms of biological role, protein S12 is involved in the translation initiation step. This Bigelowiella natans (Pedinomonas minutissima) protein is Small ribosomal subunit protein uS12m (RPS12).